A 288-amino-acid chain; its full sequence is 4-diphosphocytidyl-2-C-methyl-D-erythritol kinase (288 aa).

Residue Lys8 is part of the active site. Pro90–Ser100 lines the ATP pocket. Asp132 is an active-site residue.

This sequence belongs to the GHMP kinase family. IspE subfamily.

The catalysed reaction is 4-CDP-2-C-methyl-D-erythritol + ATP = 4-CDP-2-C-methyl-D-erythritol 2-phosphate + ADP + H(+). The protein operates within isoprenoid biosynthesis; isopentenyl diphosphate biosynthesis via DXP pathway; isopentenyl diphosphate from 1-deoxy-D-xylulose 5-phosphate: step 3/6. Its function is as follows. Catalyzes the phosphorylation of the position 2 hydroxy group of 4-diphosphocytidyl-2C-methyl-D-erythritol. The sequence is that of 4-diphosphocytidyl-2-C-methyl-D-erythritol kinase from Chlamydia trachomatis serovar A (strain ATCC VR-571B / DSM 19440 / HAR-13).